The following is a 1091-amino-acid chain: Ninein homolog (1091 aa).

The segment at 1 to 361 (MEVSADPYEQ…AVEVDERHAS (361 aa)) is sufficient for binding to microtubules. Disordered regions lie at residues 100–216 (YIES…TTSP), 456–483 (AQTS…KEEE), 525–602 (KAKK…EELT), and 616–639 (KAAK…SLEQ). Phosphoserine is present on residues S103, S107, S108, S113, and S141. T144 carries the post-translational modification Phosphothreonine. Positions 168 to 177 (VQRSSSQSDL) are enriched in polar residues. The tract at residues 487–526 (LMEKLAALQMENAQLRDKTDELTIEIESLNVELIRSKTKA) is sufficient for interaction with ens. 2 stretches are compositionally biased toward basic and acidic residues: residues 527 to 537 (KKQEKQEKQED) and 547 to 563 (RRGD…ESPR). S594 is modified (phosphoserine). Basic and acidic residues predominate over residues 616-634 (KAAKEGRSLTPESRSKELE). 2 positions are modified to phosphoserine: S701 and S714. Residues 799–919 (AKSLADSKDE…TSCLSHEKCS (121 aa)) form a disordered region. The segment covering 822–845 (SHKTASRNNLTTSETSIFSTTPFE) has biased composition (polar residues). The span at 846-860 (SSQSGPSPTNSGNSN) shows a compositional bias: low complexity. Polar residues predominate over residues 894–913 (ETSSTASGKSFESNSKTSCL).

As to quaternary structure, interacts with ens.

The protein localises to the cytoplasm. It is found in the cytoskeleton. Its subcellular location is the microtubule organizing center. It localises to the centrosome. The protein resides in the perinuclear region. In terms of biological role, required for the positioning and anchorage of the microtubule minus-ends in various cells. In fat body cells, part of perinuclear non-centrosomal microtubule-organizing centers (ncMTOCs) which function to accommodate the organization of microtubule (MT) networks to control nuclear positioning and dynein motor-based retrograde endosomal trafficking. Within the ncMTOCs, Msp300 and shot anchors the ncMTOC at the nuclear surface and recruits the MT minus-end regulators Patronin and Nin for assembly, anchoring and/or stabilization of circumferential and radial MTs at the ncMTOC. This protein may also function with Patronin to recruit msps to the ncMTOC for the gamma-tubulin-independent elongation of radial MTs. In embryonic myotubes and larval myofibers, functions with ens to regulate myonuclear positioning and, as a consequence, is involved in muscle development. Likely functions by positively regulating ens. Essential for embryogenesis, likely by contributing to accurate chromosome segregation during early embryonic nuclear divisions. However, other reports found that it is not essential for embryogenesis or embryonic cellular divisions. The protein is Ninein homolog of Drosophila melanogaster (Fruit fly).